The following is a 548-amino-acid chain: Probable thiamine biosynthetic bifunctional enzyme, chloroplastic (548 aa).

Positions 1–10 (MAAAPQQSVH) are enriched in polar residues. Residues 1–40 (MAAAPQQSVHPSLPSSTSTLRLLISSSPRRPPPPPPRARR) are disordered. A chloroplast-targeting transit peptide spans 1 to 47 (MAAAPQQSVHPSLPSSTSTLRLLISSSPRRPPPPPPRARRYNRLAAS). Residues 11 to 28 (PSLPSSTSTLRLLISSSP) are compositionally biased toward low complexity. Residues 372 to 376 (QLREK) and N404 each bind 4-amino-2-methyl-5-(diphosphooxymethyl)pyrimidine. Mg(2+) is bound by residues D405 and D424. S443 serves as a coordination point for 4-amino-2-methyl-5-(diphosphooxymethyl)pyrimidine. 2-[(2R,5Z)-2-carboxy-4-methylthiazol-5(2H)-ylidene]ethyl phosphate is bound at residue 469–471 (TST). Residue K472 coordinates 4-amino-2-methyl-5-(diphosphooxymethyl)pyrimidine. Residues G499 and 522 to 523 (VS) contribute to the 2-[(2R,5Z)-2-carboxy-4-methylthiazol-5(2H)-ylidene]ethyl phosphate site.

Belongs to the thiamine-phosphate synthase family. It depends on Mg(2+) as a cofactor.

Its subcellular location is the plastid. The protein resides in the chloroplast. It carries out the reaction 2-[(2R,5Z)-2-carboxy-4-methylthiazol-5(2H)-ylidene]ethyl phosphate + 4-amino-2-methyl-5-(diphosphooxymethyl)pyrimidine + 2 H(+) = thiamine phosphate + CO2 + diphosphate. The enzyme catalyses 2-(2-carboxy-4-methylthiazol-5-yl)ethyl phosphate + 4-amino-2-methyl-5-(diphosphooxymethyl)pyrimidine + 2 H(+) = thiamine phosphate + CO2 + diphosphate. It catalyses the reaction 4-methyl-5-(2-phosphooxyethyl)-thiazole + 4-amino-2-methyl-5-(diphosphooxymethyl)pyrimidine + H(+) = thiamine phosphate + diphosphate. The catalysed reaction is 4-amino-5-hydroxymethyl-2-methylpyrimidine + ATP = 4-amino-2-methyl-5-(phosphooxymethyl)pyrimidine + ADP + H(+). It functions in the pathway cofactor biosynthesis; thiamine diphosphate biosynthesis; thiamine phosphate from 4-amino-2-methyl-5-diphosphomethylpyrimidine and 4-methyl-5-(2-phosphoethyl)-thiazole: step 1/1. It participates in cofactor biosynthesis; thiamine diphosphate biosynthesis; 4-amino-2-methyl-5-diphosphomethylpyrimidine from 5-amino-1-(5-phospho-D-ribosyl)imidazole: step 2/3. Its function is as follows. Essential for thiamine biosynthesis. Bifunctional enzyme that catalyzes the phosphorylation of hydroxymethylpyrimidine phosphate (HMP-P) to HMP-PP and condenses 4-methyl-5-(beta-hydroxyethyl)thiazole monophosphate (THZ-P) and 2-methyl-4-amino-5-hydroxymethyl pyrimidine pyrophosphate (HMP-PP) to form thiamine monophosphate (TMP). This Oryza sativa subsp. japonica (Rice) protein is Probable thiamine biosynthetic bifunctional enzyme, chloroplastic.